We begin with the raw amino-acid sequence, 483 residues long: MPVPPPPPPPLPPPPPPLGAPPPPPPSAPPVSTDTSSLRRADPKGRSALLADIQQGTRLRKVTQINDRSAPQIESSKGTNKEGGGSANTRGASTPPTLGDLFAGGFPVLRPAGQRDVAGGKTGQGPGSRAPSPRLPNKTISGPLIPPASPRLGNTSEAHGAARTAPPRPNVPAPPPPTPPPPPPPLPPPLPSSSPIKTPLVSPPGPLTKGNLPVVAPPVPCAPPPPPPPPPPTPPPLPPASVLSDKAVKPQLAPLHLPPIPPPLPLLPPCGYPGLKAEPASPAQDAQEPPAPPPPLPPYASCSPRASLPAPPLPGVNSSSETPPPLPPKSPSFQAPPQKAGAQALPAPPAPPGSQPFLQKKRHGRPGAGGGKLNPPPAPPARSPTTELSSKSQQATAWTPTQQPGGQLRNGSLHIIDDFESKFTFHSVEDFPPPDEYKPCQKIYPSKIPRSRTPGPWLQAEAVGQSSDDIKGRNSQLSLKTLR.

The segment covering 1–29 has biased composition (pro residues); that stretch reads MPVPPPPPPPLPPPPPPLGAPPPPPPSAP. The segment at 1–414 is disordered; the sequence is MPVPPPPPPP…GGQLRNGSLH (414 aa). 3 short sequence motifs (profilin-binding motif) span residues 3-8, 11-16, and 20-25; these read VPPPPP, LPPPPP, and APPPPP. Positions 45–62 constitute a WH2 domain; the sequence is GRSALLADIQQGTRLRKV. R46 is subject to Asymmetric dimethylarginine. The RLRK motif lies at 58 to 61; it reads RLRK. Polar residues-rich tracts occupy residues 63 to 78 and 87 to 96; these read TQINDRSAPQIESSKG and ANTRGASTPP. A Phosphoserine modification is found at S149. Residues 166–192 are compositionally biased toward pro residues; the sequence is PPRPNVPAPPPPTPPPPPPPLPPPLPS. S202 is subject to Phosphoserine. Composition is skewed to pro residues over residues 215–239 and 256–271; these read VAPPVPCAPPPPPPPPPPTPPPLPP and HLPPIPPPLPLLPPCG. A compositionally biased stretch (low complexity) spans 277–288; that stretch reads AEPASPAQDAQE. The span at 289-298 shows a compositional bias: pro residues; sequence PPAPPPPLPP. Low complexity-rich tracts occupy residues 299-308 and 331-345; these read YASCSPRASL and PSFQAPPQKAGAQAL. At S383 the chain carries Phosphoserine. Residues 393–404 are compositionally biased toward low complexity; sequence QQATAWTPTQQP. Residues 424 to 448 carry the WASP-binding motif motif; that stretch reads TFHSVEDFPPPDEYKPCQKIYPSKI. The interval 461–483 is disordered; sequence EAVGQSSDDIKGRNSQLSLKTLR. Over residues 473–483 the composition is skewed to polar residues; sequence RNSQLSLKTLR.

It belongs to the verprolin family. As to quaternary structure, interacts with WASL, and monomeric and filamentous actin.

The protein resides in the cytoplasm. In terms of biological role, may be a regulator of cytoskeletal organization. May have a role in spermatogenesis. This is WAS/WASL-interacting protein family member 3 (WIPF3) from Homo sapiens (Human).